Reading from the N-terminus, the 275-residue chain is Tryptophan synthase alpha chain (275 aa).

Glu-51 serves as the catalytic Proton acceptor.

The protein belongs to the TrpA family. As to quaternary structure, tetramer of two alpha and two beta chains.

The enzyme catalyses (1S,2R)-1-C-(indol-3-yl)glycerol 3-phosphate + L-serine = D-glyceraldehyde 3-phosphate + L-tryptophan + H2O. It functions in the pathway amino-acid biosynthesis; L-tryptophan biosynthesis; L-tryptophan from chorismate: step 5/5. Its function is as follows. The alpha subunit is responsible for the aldol cleavage of indoleglycerol phosphate to indole and glyceraldehyde 3-phosphate. The protein is Tryptophan synthase alpha chain of Caulobacter vibrioides (strain ATCC 19089 / CIP 103742 / CB 15) (Caulobacter crescentus).